Reading from the N-terminus, the 480-residue chain is EGF-like repeat and discoidin I-like domain-containing protein 3 (480 aa).

The signal sequence occupies residues 1-23 (MKRSVAVWLLVGLSLGVPQFGKG). Residues 24–60 (DICDPNPCENGGICLPGLADGSFSCECPDGFTDPNCS) enclose the EGF-like 1 domain. 3 disulfides stabilise this stretch: C26–C37, C31–C48, and C50–C59. Residue T73 is glycosylated (O-linked (GalNAc...) threonine). 2 consecutive EGF-like domains span residues 74–117 (SAGP…IHCQ) and 119–155 (NINE…RNCQ). Intrachain disulfides connect C78/C89, C83/C105, and C107/C116. The O-linked (Fuc...) threonine glycan is linked to T88. Positions 96–98 (RGD) match the Cell attachment site motif. Residues N119, I120, and E122 each coordinate Ca(2+). 6 disulfide bridges follow: C123–C134, C128–C143, C145–C154, C158–C314, C301–C305, and C319–C476. The Ca(2+) site is built by D136 and L137. N140 carries N-linked (GlcNAc...) asparagine glycosylation. F5/8 type C domains are found at residues 158-314 (CSGP…LLGC) and 319-476 (CSEP…LLGC).

The protein resides in the secreted. In terms of biological role, promotes adhesion of endothelial cells through interaction with the alpha-v/beta-3 integrin receptor. Inhibits formation of vascular-like structures. May be involved in regulation of vascular morphogenesis of remodeling in embryonic development. The protein is EGF-like repeat and discoidin I-like domain-containing protein 3 (EDIL3) of Homo sapiens (Human).